Consider the following 489-residue polypeptide: WPP domain-interacting protein 1 (489 aa).

Residues 49–73 (SNSVELGKPMSFDSPGDGGGAYSPV) are disordered. Short sequence motifs (nuclear localization signal) lie at residues 80-81 (RK), 83-84 (RR), and 104-105 (KR). Residues 195–264 (PMISSGQGGN…DDAGGEGGES (70 aa)) are disordered. The segment covering 215 to 224 (GESVDFEKEN) has biased composition (basic and acidic residues). The stretch at 323–446 (EIVTLVNNVE…QDLQNDCIEI (124 aa)) forms a coiled coil. One can recognise a KASH domain in the interval 459–489 (SYVLIQLVLLSTVVLLLLSQLLPEPDTVVPT). The chain crosses the membrane as a helical span at residues 460–480 (YVLIQLVLLSTVVLLLLSQLL).

Homodimer and heterodimer with WIP2. Component of Ran complexes at least composed of WIT1 or WIT2, RANGAP1 or RANGAP2, and WIP1 or WIP2 or WIP3. Interacts with RANGAP1, RANGAP2, WPP1/MAF1, and WPP2/MAF2. Interacts with SUN1 and SUN2. Interacts with KIN1. Core component of the LINC complex which is composed of inner nuclear membrane SUN domain-containing proteins coupled to outer nuclear membrane WIP and WIT proteins. The LINC complex also involves nucleoskeletal proteins CRWN/LINC and possibly KAKU4 and the cytoskeletal myosin KAKU1. Interacts with WIT1 and SUN2. Interacts with WIT2. Interacts with SUN3. Expressed in seedlings, roots, stems, leaves, and flowers.

The protein resides in the nucleus envelope. Its subcellular location is the nucleus membrane. Its function is as follows. Mediates and enhances the nuclear envelope docking of RANGAP proteins mediated by WIT1 and WIT2 in the undifferentiated cells of root tips. As component of the SUN-WIP-WIT2-KAKU1 complex, mediates the transfer of cytoplasmic forces to the nuclear envelope (NE), leading to nuclear shape changes. In Arabidopsis thaliana (Mouse-ear cress), this protein is WPP domain-interacting protein 1 (WIP1).